A 343-amino-acid chain; its full sequence is Probable dual-specificity RNA methyltransferase RlmN (343 aa).

Catalysis depends on Glu-91, which acts as the Proton acceptor. The 230-residue stretch at 97–326 (HPDRITACIS…AEIRREKGTD (230 aa)) folds into the Radical SAM core domain. Cysteines 104 and 331 form a disulfide. Cys-111, Cys-115, and Cys-118 together coordinate [4Fe-4S] cluster. Residues 158-159 (GE), Ser-190, 213-215 (SLH), and Asn-289 contribute to the S-adenosyl-L-methionine site. Catalysis depends on Cys-331, which acts as the S-methylcysteine intermediate.

This sequence belongs to the radical SAM superfamily. RlmN family. The cofactor is [4Fe-4S] cluster.

The protein resides in the cytoplasm. It carries out the reaction adenosine(2503) in 23S rRNA + 2 reduced [2Fe-2S]-[ferredoxin] + 2 S-adenosyl-L-methionine = 2-methyladenosine(2503) in 23S rRNA + 5'-deoxyadenosine + L-methionine + 2 oxidized [2Fe-2S]-[ferredoxin] + S-adenosyl-L-homocysteine. It catalyses the reaction adenosine(37) in tRNA + 2 reduced [2Fe-2S]-[ferredoxin] + 2 S-adenosyl-L-methionine = 2-methyladenosine(37) in tRNA + 5'-deoxyadenosine + L-methionine + 2 oxidized [2Fe-2S]-[ferredoxin] + S-adenosyl-L-homocysteine. Its function is as follows. Specifically methylates position 2 of adenine 2503 in 23S rRNA and position 2 of adenine 37 in tRNAs. The chain is Probable dual-specificity RNA methyltransferase RlmN from Thermotoga maritima (strain ATCC 43589 / DSM 3109 / JCM 10099 / NBRC 100826 / MSB8).